Here is a 461-residue protein sequence, read N- to C-terminus: V-type ATP synthase beta chain (461 aa).

It belongs to the ATPase alpha/beta chains family.

Functionally, produces ATP from ADP in the presence of a proton gradient across the membrane. The V-type beta chain is a regulatory subunit. This is V-type ATP synthase beta chain from Clostridium botulinum (strain Langeland / NCTC 10281 / Type F).